The following is a 261-amino-acid chain: 5'-nucleotidase SurE (261 aa).

A divalent metal cation contacts are provided by aspartate 12, aspartate 13, serine 43, and asparagine 99.

Belongs to the SurE nucleotidase family. A divalent metal cation serves as cofactor.

The protein localises to the cytoplasm. The enzyme catalyses a ribonucleoside 5'-phosphate + H2O = a ribonucleoside + phosphate. Its function is as follows. Nucleotidase that shows phosphatase activity on nucleoside 5'-monophosphates. This chain is 5'-nucleotidase SurE, found in Polynucleobacter asymbioticus (strain DSM 18221 / CIP 109841 / QLW-P1DMWA-1) (Polynucleobacter necessarius subsp. asymbioticus).